The primary structure comprises 238 residues: Dephospho-CoA kinase (238 aa).

Residues 3–233 form the DPCK domain; that stretch reads IIGLTGGVGT…QRPFASPPRA (231 aa). 11 to 16 serves as a coordination point for ATP; that stretch reads GTGKST. Disordered regions lie at residues 110–129 and 219–238; these read HGVPLEEEPASQKRSGVGFS and LASAGQRPFASPPRAGYSDG.

The protein belongs to the CoaE family.

The protein localises to the cytoplasm. The enzyme catalyses 3'-dephospho-CoA + ATP = ADP + CoA + H(+). It functions in the pathway cofactor biosynthesis; coenzyme A biosynthesis; CoA from (R)-pantothenate: step 5/5. Its function is as follows. Catalyzes the phosphorylation of the 3'-hydroxyl group of dephosphocoenzyme A to form coenzyme A. The protein is Dephospho-CoA kinase of Synechococcus sp. (strain JA-2-3B'a(2-13)) (Cyanobacteria bacterium Yellowstone B-Prime).